The sequence spans 332 residues: Tetraacyldisaccharide 4'-kinase (332 aa).

60–67 (TVGGTGKT) is an ATP binding site.

Belongs to the LpxK family.

It catalyses the reaction a lipid A disaccharide + ATP = a lipid IVA + ADP + H(+). The protein operates within glycolipid biosynthesis; lipid IV(A) biosynthesis; lipid IV(A) from (3R)-3-hydroxytetradecanoyl-[acyl-carrier-protein] and UDP-N-acetyl-alpha-D-glucosamine: step 6/6. Transfers the gamma-phosphate of ATP to the 4'-position of a tetraacyldisaccharide 1-phosphate intermediate (termed DS-1-P) to form tetraacyldisaccharide 1,4'-bis-phosphate (lipid IVA). This is Tetraacyldisaccharide 4'-kinase from Pseudomonas aeruginosa (strain LESB58).